Here is a 1464-residue protein sequence, read N- to C-terminus: ABC transporter G family member 35 (1464 aa).

The tract at residues 1–26 (MDAAAEMQKVVSLRRGGGGSSSRGAA) is disordered. In terms of domain architecture, ABC transporter 1 spans 173 to 446 (ANALGILPNK…FELMGFKCPE (274 aa)). An ATP-binding site is contributed by 206-213 (GPPGSGKT). The 214-residue stretch at 524–737 (ELLKANIDRE…AQNAISVNEF (214 aa)) folds into the ABC transmembrane type-2 1 domain. Transmembrane regions (helical) follow at residues 542–562 (FVYI…MTVF), 575–595 (GVIF…NGLS), 630–650 (IPMS…VIGF), 662–682 (LLML…GGAA), 686–706 (IVAN…GGFI), 715–735 (WWIW…ISVN), and 774–794 (IGFG…TLAL). The ABC transporter 2 domain occupies 867–1119 (LTFDNIKYSV…ELIKYFEGIK (253 aa)). 912–919 (GVSGAGKT) contacts ATP. The ABC transmembrane type-2 2 domain occupies 1192–1406 (NQCLACLWKM…TLYGLVASQF (215 aa)). Transmembrane regions (helical) follow at residues 1213–1233 (AIRL…FWDL), 1243–1263 (LFNA…LNSQ), 1299–1319 (FPYT…MIGF), 1326–1346 (FFWY…YGMM), 1356–1376 (VASI…GFII), 1387–1407 (WYCW…SQFG), and 1436–1456 (VVAV…GFAI).

The protein belongs to the ABC transporter superfamily. ABCG family. PDR (TC 3.A.1.205) subfamily.

Its subcellular location is the membrane. Functionally, may be a general defense protein. The protein is ABC transporter G family member 35 of Oryza sativa subsp. japonica (Rice).